We begin with the raw amino-acid sequence, 835 residues long: Prickle-like protein 1-A (835 aa).

Residues 14–122 (FGCQRSSTSD…NIKMLSRAVM (109 aa)) enclose the PET domain. LIM zinc-binding domains follow at residues 124 to 188 (ATCE…ELLK), 189 to 249 (PRCS…HYAE), and 250 to 313 (YCES…EDVH). 4 disordered regions span residues 312–346 (VHASDSSDSAFQSARSRESRRSVRMGKSSRSADQC), 426–455 (LFQQPPEDNRSNDHWMSENIKGKNDLQRNN), 603–706 (CQEK…RKRS), and 769–835 (CSSS…CIIS). Composition is skewed to basic and acidic residues over residues 432–453 (EDNRSNDHWMSENIKGKNDLQR), 603–614 (CQEKPPPEEKPM), and 646–655 (EIRRPPMSER). Basic residues-rich tracts occupy residues 669–683 (RPHHHHHHRRRKSRK) and 819–835 (SKSKKKKGHKGKNCIIS). The residue at position 832 (C832) is a Cysteine methyl ester. C832 is lipidated: S-farnesyl cysteine. A propeptide spans 833–835 (IIS) (removed in mature form).

It belongs to the prickle / espinas / testin family. Interacts with dvl2/dsh and mapk8/jnk1. Expressed in the dorsal marginal zone of early gastrulae (stage 10). As gastrulation proceeds, expression expands to include the lateral and ventral marginal zones, excluding the few rows of cells above the blastopore lip. Expression moves dorsally with gastrulation cell movements, and by the end of gastrulation expression is seen in dorsal mesoderm and posterior but not anterior neural ectoderm. Expression becomes down-regulated in mesoderm but remains strong in posterior ectoderm through the neurula stages. During tailbud stages, expressed in the pronephric duct, tailbud, tailtip and forming somites. In the most posterior regions, expressed in notochord and in the floorplate of the neural tube with weak expression in the roofplate. At stage 30, expressed in a complex pattern in the head including strong expression in the lens and otic vesicle.

It is found in the cell membrane. Acts in a planar cell polarity (PCP) complex; polarization along the apical/basal axis of epithelial cells. Regulates the polarized assembly of fibronectrin on the surface of the mesoderm during gastrulation. Essential for gastrulation cell movements, cooperating with dvl2/dsh to activate jnk. Acts together with tes to control axial elongation. The protein is Prickle-like protein 1-A (prickle1-a) of Xenopus laevis (African clawed frog).